Here is a 427-residue protein sequence, read N- to C-terminus: Anaerobic glycerol-3-phosphate dehydrogenase subunit B (427 aa).

It belongs to the anaerobic G-3-P dehydrogenase subunit B family. In terms of assembly, composed of a catalytic GlpA/B dimer and of membrane bound GlpC. Requires FMN as cofactor.

The enzyme catalyses a quinone + sn-glycerol 3-phosphate = dihydroxyacetone phosphate + a quinol. Its pathway is polyol metabolism; glycerol degradation via glycerol kinase pathway; glycerone phosphate from sn-glycerol 3-phosphate (anaerobic route): step 1/1. In terms of biological role, conversion of glycerol 3-phosphate to dihydroxyacetone. Uses fumarate or nitrate as electron acceptor. This Glaesserella parasuis serovar 5 (strain SH0165) (Haemophilus parasuis) protein is Anaerobic glycerol-3-phosphate dehydrogenase subunit B.